Here is a 50-residue protein sequence, read N- to C-terminus: Protein PsbN (50 aa).

A helical transmembrane segment spans residues 14 to 34 (IAVTILALLLALTGFGLWTAF).

This sequence belongs to the PsbN family.

Its subcellular location is the cellular thylakoid membrane. Functionally, may play a role in photosystem I and II biogenesis. In Prochlorococcus marinus (strain MIT 9301), this protein is Protein PsbN.